The chain runs to 404 residues: Serine/threonine transporter SstT (404 aa).

The next 8 helical transmembrane spans lie at 17 to 37, 39 to 59, 75 to 95, 138 to 158, 179 to 199, 212 to 232, 287 to 307, and 313 to 333; these read IGIGVVIGVMLGILAPDLTGF, ILGKLFVGGLKAIAPLLVFAL, MTLIIVLYLFGTFASALVAVL, ALATANYIGVLSWAIIFGLAL, IVVWIINLAPIGIMSLVFTTI, FLILVLVGTMLFVALVVNPLI, IPLGATINMGGAAITINVLTL, and FGIPIDFLTALLLSVVAAVSA.

Belongs to the dicarboxylate/amino acid:cation symporter (DAACS) (TC 2.A.23) family.

It is found in the cell membrane. It carries out the reaction L-serine(in) + Na(+)(in) = L-serine(out) + Na(+)(out). The catalysed reaction is L-threonine(in) + Na(+)(in) = L-threonine(out) + Na(+)(out). Involved in the import of serine and threonine into the cell, with the concomitant import of sodium (symport system). The protein is Serine/threonine transporter SstT of Streptococcus pyogenes serotype M1.